We begin with the raw amino-acid sequence, 475 residues long: UDP-glycosyltransferase 84A4 (475 aa).

Histidine 20 (proton acceptor) is an active-site residue. Histidine 20 serves as a coordination point for an anthocyanidin. 6 residues coordinate UDP-alpha-D-glucose: glutamine 342, histidine 357, tryptophan 360, asparagine 361, serine 362, and glutamate 365. Glycine 380 provides a ligand contact to an anthocyanidin. Residues aspartate 381 and glutamine 382 each contribute to the UDP-alpha-D-glucose site.

Belongs to the UDP-glycosyltransferase family.

It catalyses the reaction (E)-4-coumarate + UDP-alpha-D-glucose = 4-O-(beta-D-glucosyl)-trans-4-coumarate + UDP + H(+). The enzyme catalyses (E)-ferulate + UDP-alpha-D-glucose = 1-O-[(E)-feruloyl]-beta-D-glucose + UDP. It carries out the reaction (E)-caffeate + UDP-alpha-D-glucose = 1-O-[(E)-caffeoyl]-beta-D-glucose + UDP. The catalysed reaction is (E)-sinapate + UDP-alpha-D-glucose = 1-O-(trans-sinapoyl)-beta-D-glucose + UDP. It catalyses the reaction (E)-cinnamate + UDP-alpha-D-glucose = 1-O-(trans-cinnamoyl)-beta-D-glucose + UDP. UDP-glucosyltransferase that forms glucose esters with phenylpropanoids. Glucosylates 4-coumarate, ferulate, caffeate, sinapate and cinnamate. The protein is UDP-glycosyltransferase 84A4 of Arabidopsis thaliana (Mouse-ear cress).